Consider the following 677-residue polypeptide: MQTSTEVVPPLMSRFRPSAAPRKPAPFLPMSRAEMDKLGWDACDIVLVTGDAYVDHPSFGMAIIGRLLESQGFRVGIISQPDWQSAEPFKALGKPRVFFGVTGGNMDSMVNRYTADRRLRHDDAYTPNGEGGKRPDRCTLVYAQRCREAFKDVPIILGGIEASLRRIAHYDYWSDKVRRSVLADAKADLLLYGNAERAVIEVAHRLAAGEAPRELEDIRGVALFRRVPENTIELHADDLDAADEGARQVRGDVVIRLPSCEQVEQDKEAYARASRVLHRESNPGNARPLVQRHGDRDLWLNPPPIPLTTEEMDSVYDLPYARAPHPSYGNAKIPAWDMIKTSVTIMRGCFGGCTFCSITEHEGRIIQSRSEASILQEIEKIRDKTPGFTGVISDIGGPTANMYRMACKDSNIESSCRKPSCVFPDICPNLNTSHDDLIRLYRKVREVKGIKRVMVASGVRYDLAVKSPAYIKELVSHHVGGYLKIAPEHTERGPLDKMMKPGIGTYHRFKQMFEAAAKQAGKQYYLIPYFIAAHPGTTDEDMMNLALWLKRNRYRADQVQTFLPSPMATATAMYHSGVNPLRGVRHGASEPVEAIKGLRQRRLHKAFLRYHDPDNWPVLREALKAMGRADLIGSRPDQLVPAHQPPGTGKAAGTRRPVRGDGPKPQRFTTKGVRLVK.

Residues 335–601 form the Radical SAM core domain; the sequence is AWDMIKTSVT…VEAIKGLRQR (267 aa). Cys-349, Cys-353, and Cys-356 together coordinate [4Fe-4S] cluster. Residues 635-677 form a disordered region; that stretch reads RPDQLVPAHQPPGTGKAAGTRRPVRGDGPKPQRFTTKGVRLVK.

It belongs to the UPF0313 family. [4Fe-4S] cluster serves as cofactor.

The chain is UPF0313 protein RPA0679 from Rhodopseudomonas palustris (strain ATCC BAA-98 / CGA009).